The sequence spans 445 residues: Canavalin (445 aa).

The N-terminal stretch at 1-26 (MAFSARFPLWLLLGVVLLASVSASFA) is a signal peptide. Cupin type-1 domains lie at 49 to 207 (YLFR…DEIE) and 249 to 407 (FNLR…EEVE).

The protein belongs to the 7S seed storage protein family. As to quaternary structure, homotrimer.

In terms of biological role, seed storage protein. The protein is Canavalin of Canavalia gladiata (Sword bean).